A 277-amino-acid chain; its full sequence is NH(3)-dependent NAD(+) synthetase (277 aa).

G46–S53 contacts ATP. A Mg(2+)-binding site is contributed by D52. R142 serves as a coordination point for deamido-NAD(+). Residue T162 participates in ATP binding. Mg(2+) is bound at residue E167. K175 and D182 together coordinate deamido-NAD(+). Residues K191 and T213 each coordinate ATP. Residue H263–K264 participates in deamido-NAD(+) binding.

The protein belongs to the NAD synthetase family. As to quaternary structure, homodimer.

The enzyme catalyses deamido-NAD(+) + NH4(+) + ATP = AMP + diphosphate + NAD(+) + H(+). It functions in the pathway cofactor biosynthesis; NAD(+) biosynthesis; NAD(+) from deamido-NAD(+) (ammonia route): step 1/1. Catalyzes the ATP-dependent amidation of deamido-NAD to form NAD. Uses ammonia as a nitrogen source. The chain is NH(3)-dependent NAD(+) synthetase from Corynebacterium glutamicum (strain R).